The primary structure comprises 495 residues: Probable aspartic-type endopeptidase OPSB (495 aa).

An N-terminal signal peptide occupies residues 1 to 19 (MRGDSFIWSLATAIPLLST). Positions 73–408 (YFCNLTLGTP…DLDNNEISIA (336 aa)) constitute a Peptidase A1 domain. The N-linked (GlcNAc...) asparagine glycan is linked to Asn76. Residue Asp91 is part of the active site. Asn136 carries an N-linked (GlcNAc...) asparagine glycan. Asp290 is an active-site residue. N-linked (GlcNAc...) asparagine glycosylation is present at Asn413. The segment at 448–470 (TGLPGVETGVPGSRPPSSKAAGQ) is disordered. Residue Ala467 is the site of GPI-anchor amidated alanine attachment. Residues 468-495 (AGQAKRPDFVLGVAAVGLAGAGMLFAAM) constitute a propeptide, removed in mature form.

The protein belongs to the peptidase A1 family.

The protein resides in the cell membrane. Probable GPI-anchored aspartic-type endopeptidase which contributes to virulence. This Trichophyton verrucosum (strain HKI 0517) protein is Probable aspartic-type endopeptidase OPSB (OPSB).